A 310-amino-acid polypeptide reads, in one-letter code: MRRVNILCSFALLFASHTSLAVTYPLPPEGSRLVGQSFTVTVPDHNTQPLETFAAQYGQGLSNMLEANPGADVFLPKSGSQLTIPQQLILPDTVRKGIVVNVAEMRLYYYPPDSNTVEVFPIGIGQAGRETPRNWVTTVERKQEAPTWTPTPNTRREYAKRGESLPAFVPAGPDNPMGLYAIYIGRLYAIHGTNANFGIGLRVSQGCIRLRNDDIKYLFDNVPVGTRVQIIDQPVKYTTEPDGSNWLEVHEPLSRNRAEYESDRKVPLPVTPSLRAFINGQEVDVNRANAALQRRSGMPVQISSGSRQMF.

A signal peptide spans 1–21 (MRRVNILCSFALLFASHTSLA). The L,D-TPase catalytic domain maps to 96–231 (KGIVVNVAEM…VPVGTRVQII (136 aa)). Catalysis depends on His191, which acts as the Proton donor/acceptor. Residue Cys207 is the Nucleophile of the active site.

Belongs to the YkuD family. Interacts with DsbG.

It localises to the periplasm. It functions in the pathway cell wall biogenesis; peptidoglycan biosynthesis. Responsible, at least in part, for anchoring of the major outer membrane lipoprotein (Lpp, also known as the Braun lipoprotein) to the peptidoglycan via a meso-diaminopimelyl-L-Lys- bond on the terminal residue of Lpp. This chain is Probable L,D-transpeptidase ErfK/SrfK (erfK), found in Escherichia coli (strain K12).